The following is a 505-amino-acid chain: Cysteine--tRNA ligase (505 aa).

C33 contributes to the Zn(2+) binding site. The short motif at 35-45 (PTVYDFAHIGN) is the 'HIGH' region element. C229, H268, and E272 together coordinate Zn(2+). A 'KMSKS' region motif is present at residues 301–305 (KMSKS). K304 contacts ATP.

This sequence belongs to the class-I aminoacyl-tRNA synthetase family. In terms of assembly, monomer. Requires Zn(2+) as cofactor.

It is found in the cytoplasm. It catalyses the reaction tRNA(Cys) + L-cysteine + ATP = L-cysteinyl-tRNA(Cys) + AMP + diphosphate. In Brucella anthropi (strain ATCC 49188 / DSM 6882 / CCUG 24695 / JCM 21032 / LMG 3331 / NBRC 15819 / NCTC 12168 / Alc 37) (Ochrobactrum anthropi), this protein is Cysteine--tRNA ligase.